The chain runs to 352 residues: UDP-N-acetylglucosamine--N-acetylmuramyl-(pentapeptide) pyrophosphoryl-undecaprenol N-acetylglucosamine transferase (352 aa).

Positions 195 and 287 each coordinate UDP-N-acetyl-alpha-D-glucosamine.

This sequence belongs to the glycosyltransferase 28 family. MurG subfamily.

The protein localises to the cell membrane. It carries out the reaction Mur2Ac(oyl-L-Ala-gamma-D-Glu-L-Lys-D-Ala-D-Ala)-di-trans,octa-cis-undecaprenyl diphosphate + UDP-N-acetyl-alpha-D-glucosamine = beta-D-GlcNAc-(1-&gt;4)-Mur2Ac(oyl-L-Ala-gamma-D-Glu-L-Lys-D-Ala-D-Ala)-di-trans,octa-cis-undecaprenyl diphosphate + UDP + H(+). It functions in the pathway cell wall biogenesis; peptidoglycan biosynthesis. Cell wall formation. Catalyzes the transfer of a GlcNAc subunit on undecaprenyl-pyrophosphoryl-MurNAc-pentapeptide (lipid intermediate I) to form undecaprenyl-pyrophosphoryl-MurNAc-(pentapeptide)GlcNAc (lipid intermediate II). This chain is UDP-N-acetylglucosamine--N-acetylmuramyl-(pentapeptide) pyrophosphoryl-undecaprenol N-acetylglucosamine transferase, found in Streptococcus pneumoniae (strain Taiwan19F-14).